Consider the following 147-residue polypeptide: Protein MGF 100-3L (147 aa).

The protein belongs to the asfivirus MGF 100 family.

In terms of biological role, plays a role in virus cell tropism, and may be required for efficient virus replication in macrophages. This is Protein MGF 100-3L from African swine fever virus (isolate Tick/Malawi/Lil 20-1/1983) (ASFV).